Reading from the N-terminus, the 122-residue chain is Protein NIM1-INTERACTING 2 (122 aa).

The segment covering 1 to 22 (MNNSLKKEERVEEDNGKSDGNR) has biased composition (basic and acidic residues). The interval 1–28 (MNNSLKKEERVEEDNGKSDGNRGKPSTE) is disordered. The interval 39–45 (DEFFKIL) is involved in NPR1/NIM1 interaction. The Nuclear localization signal signature appears at 70-74 (KKRKR).

As to quaternary structure, interacts with NPR1 N-terminal region.

It localises to the nucleus. The polypeptide is Protein NIM1-INTERACTING 2 (Arabidopsis thaliana (Mouse-ear cress)).